Here is a 505-residue protein sequence, read N- to C-terminus: MQFSGRIRKKLRLAGDQRNASYPHSLQFYLQPPTENISLTEFENLAFDRVKLLKAIENLGVSYVKGTEQYQSKLEAEIRKLKFSYRENLEDEYEPRRRDHISHFILRLAYCQSEDLRRWFIQQEMDLLRFRFSILPKDKVQSFLKDSHLHFEAISDEEKTLREQDIMASSPSLSGIKLESESVYKVPFADALDLFRGRKVYLEDGFAYVPLKDIVAIILNEFRATLSKALALTARSLPAVQSDERLQPLLNHLSHSYTGQDYSTQKNTGKISLDQIDSLSTKSFPPCMRQLHKALRENHHLRHGGRMQYGLFLKGIGLTLEQALQFWKQEFIRGKMDPDKFDKGYSYNIRHSFGKEGKRTDYTPFSCMKIILTNPPGQGDYHGCPFRHSDAELLKQKMQSYKIPASGISQILDLVKGNHYQVACQKYFEMTHNVDDCGFSLNHPNQFFFESQRILTGGKDIKKEISQPETPQHKPSTQKTRDAASALASLDSSLEMDLEGLEEYF.

Residues 253–270 (LSHSYTGQDYSTQKNTGK) form an interdomain linker region. The tract at residues 266–503 (KNTGKISLDQ…LEMDLEGLEE (238 aa)) is interacts with PRIM1. Residues Cys287, Cys367, Cys384, and Cys424 each coordinate [4Fe-4S] cluster. Residues 300–442 (HLRHGGRMQY…NVDDCGFSLN (143 aa)) form an RNA:DNA duplex binding region. Residues 463 to 486 (KEISQPETPQHKPSTQKTRDAASA) form a disordered region. Positions 467-478 (QPETPQHKPSTQ) are enriched in polar residues. Thr470 carries the post-translational modification Phosphothreonine.

Belongs to the eukaryotic-type primase large subunit family. Heterodimer of a catalytic subunit PRIM1 and a regulatory subunit PRIM2, also known as the DNA primase complex. Interacts via (C-terminus) with PRIM1. Component of the alpha DNA polymerase complex (also known as the alpha DNA polymerase-primase complex) consisting of four subunits: the catalytic subunit POLA1, the regulatory subunit POLA2, and the primase complex subunits PRIM1 and PRIM2 respectively. Within the complex, POLA1 directly interacts with PRIM2. Requires [4Fe-4S] cluster as cofactor.

Its function is as follows. Regulatory subunit of the DNA primase complex and component of the DNA polymerase alpha complex (also known as the alpha DNA polymerase-primase complex) which play an essential role in the initiation of DNA synthesis. During the S phase of the cell cycle, the DNA polymerase alpha complex (composed of a catalytic subunit POLA1, an accessory subunit POLA2 and two primase subunits, the catalytic subunit PRIM1 and the regulatory subunit PRIM2) is recruited to DNA at the replicative forks via direct interactions with MCM10 and WDHD1. The primase subunit of the polymerase alpha complex initiates DNA synthesis by oligomerising short RNA primers on both leading and lagging strands. These primers are initially extended by the polymerase alpha catalytic subunit and subsequently transferred to polymerase delta and polymerase epsilon for processive synthesis on the lagging and leading strand, respectively. In the primase complex, both subunits are necessary for the initial di-nucleotide formation, but the extension of the primer depends only on the catalytic subunit. Binds RNA:DNA duplex and coordinates the catalytic activities of PRIM1 and POLA2 during primase-to-polymerase switch. This is DNA primase large subunit (Prim2) from Mus musculus (Mouse).